The chain runs to 311 residues: Pyrimidine-specific ribonucleoside hydrolase RihA (311 aa).

The active site involves His240.

Belongs to the IUNH family. RihA subfamily.

Hydrolyzes cytidine or uridine to ribose and cytosine or uracil, respectively. This Salmonella choleraesuis (strain SC-B67) protein is Pyrimidine-specific ribonucleoside hydrolase RihA.